A 472-amino-acid chain; its full sequence is MLTKKPVLSPDRCFSPEPVQRRLAHQFFDSISALPLVCPHGHVDPALLANPAARFGSPTELFIIPDHYILRMLYSRGVPLEALGIPTRDAPTETDHRKIWQLFAEHFYLFQGTPSGLWLKDELTNVFGVDEALNSRNAGRIYDYLEGLLALPKFSPRALFKRFNIEVLCTTDAASDNLENQRSLHEEGFTQIRPTFRPDAVVNLDAPGWRENLTKLESSIGREISSYATFVQALEERRAFFKKMGATATDQGAATPYTTSLSDQEAEAIFARALIGKLNPGDVEQFTGHIFMEMARMSVEDGLVMQMHCGVMRNHNPALFERFGSDKGADIPLNIEWTRNLHPLLSSYGNNQRFRLIIFGMDESTYSREMAPLAGHYPTILLGPPWWFHDSVNGMERYFNQVMETAGIYNTAGFNDDTRAFVSIPARHNVWRRVACNWLAGLVTRGLVDEEEGYDMARALAYDLAKSAYKLD.

Belongs to the metallo-dependent hydrolases superfamily. Uronate isomerase family.

The catalysed reaction is D-glucuronate = D-fructuronate. It carries out the reaction aldehydo-D-galacturonate = keto-D-tagaturonate. The protein operates within carbohydrate metabolism; pentose and glucuronate interconversion. The polypeptide is Uronate isomerase (Nostoc punctiforme (strain ATCC 29133 / PCC 73102)).